A 389-amino-acid chain; its full sequence is Calreticulin (389 aa).

The first 13 residues, 1–13 (MFTLFLLIALSSA), serve as a signal peptide directing secretion. Residues 12-189 (SAKVYFHETF…GVEKQEGKFD (178 aa)) form an N-domain region. Residues Thr-20, Asn-52, and Asn-53 each coordinate Ca(2+). The cysteines at positions 96 and 130 are disulfide-linked. An alpha-D-glucoside is bound by residues Tyr-100, Lys-102, Tyr-121, and Asp-128. A run of 7 repeats spans residues 183–194 (KQEGKFDEDWDM), 202–213 (DPNVSKPADWVD), 219–230 (DPNDKKPEGWDD), 237–248 (DPNAKKPEEWND), 252–262 (GEWEAPTIENP), 266–276 (GEWKPKRIPNP), and 280–290 (GEWVHPQIANP). Positions 183–248 (KQEGKFDEDW…NAKKPEEWND (66 aa)) are 4 X approximate repeats. Positions 190-301 (EDWDMLAPKE…YVYDPELYKY (112 aa)) are P-domain. The segment covering 213 to 232 (DEKEIDDPNDKKPEGWDDIP) has biased composition (basic and acidic residues). The tract at residues 213–256 (DEKEIDDPNDKKPEGWDDIPKTIVDPNAKKPEEWNDEDDGEWEA) is disordered. The interval 252–290 (GEWEAPTIENPEYKGEWKPKRIPNPAYKGEWVHPQIANP) is 3 X approximate repeats. Residues 302-389 (DSFAYIGIDV…IKKEENKEEL (88 aa)) are C-domain. Asp-310 provides a ligand contact to an alpha-D-glucoside. Asp-321 contacts Ca(2+). Residues 329-388 (IEEAEKEAKVILERNAAEKKMRDEIKEAEKQKEEEAKKEAEKQKEEETKEEIKKEENKEE) adopt a coiled-coil conformation. Positions 347-389 (KKMRDEIKEAEKQKEEEAKKEAEKQKEEETKEEIKKEENKEEL) are disordered. The Prevents secretion from ER signature appears at 386–389 (KEEL).

This sequence belongs to the calreticulin family. Interacts (via C-terminus) with host C1q.

It is found in the endoplasmic reticulum lumen. It localises to the cell projection. The protein resides in the uropodium. The protein localises to the cell surface. Its subcellular location is the phagocytic cup. Its function is as follows. Molecular calcium-binding chaperone promoting folding, oligomeric assembly and quality control in the ER via the calreticulin/calnexin cycle. This lectin may interact transiently with almost all of the monoglucosylated glycoproteins that are synthesized in the ER. Plays a role in host cell phagocytosis, possibly by acting as a receptor for host C1q. Binding to C1q prevents the activation of the host classical complement pathway. Also, binds to apoptotic host cells independently of host C1q and collectins. This is Calreticulin from Entamoeba histolytica (strain ATCC 30459 / HM-1:IMSS / ABRM).